The following is a 235-amino-acid chain: Ribonuclease P protein component 3 (235 aa).

This sequence belongs to the eukaryotic/archaeal RNase P protein component 3 family. As to quaternary structure, consists of a catalytic RNA component and at least 4-5 protein subunits.

The protein resides in the cytoplasm. The catalysed reaction is Endonucleolytic cleavage of RNA, removing 5'-extranucleotides from tRNA precursor.. In terms of biological role, part of ribonuclease P, a protein complex that generates mature tRNA molecules by cleaving their 5'-ends. The chain is Ribonuclease P protein component 3 from Haloarcula marismortui (strain ATCC 43049 / DSM 3752 / JCM 8966 / VKM B-1809) (Halobacterium marismortui).